Here is a 49-residue protein sequence, read N- to C-terminus: Large ribosomal subunit protein bL33A (49 aa).

Belongs to the bacterial ribosomal protein bL33 family.

The protein is Large ribosomal subunit protein bL33A of Latilactobacillus sakei subsp. sakei (strain 23K) (Lactobacillus sakei subsp. sakei).